A 361-amino-acid chain; its full sequence is UDP-3-O-acylglucosamine N-acyltransferase (361 aa).

The active-site Proton acceptor is the His-253.

This sequence belongs to the transferase hexapeptide repeat family. LpxD subfamily. In terms of assembly, homotrimer.

It catalyses the reaction a UDP-3-O-[(3R)-3-hydroxyacyl]-alpha-D-glucosamine + a (3R)-hydroxyacyl-[ACP] = a UDP-2-N,3-O-bis[(3R)-3-hydroxyacyl]-alpha-D-glucosamine + holo-[ACP] + H(+). It functions in the pathway bacterial outer membrane biogenesis; LPS lipid A biosynthesis. In terms of biological role, catalyzes the N-acylation of UDP-3-O-acylglucosamine using 3-hydroxyacyl-ACP as the acyl donor. Is involved in the biosynthesis of lipid A, a phosphorylated glycolipid that anchors the lipopolysaccharide to the outer membrane of the cell. This chain is UDP-3-O-acylglucosamine N-acyltransferase, found in Burkholderia thailandensis (strain ATCC 700388 / DSM 13276 / CCUG 48851 / CIP 106301 / E264).